Consider the following 172-residue polypeptide: S-ribosylhomocysteine lyase (172 aa).

3 residues coordinate Fe cation: histidine 54, histidine 58, and cysteine 128.

Belongs to the LuxS family. Homodimer. Fe cation serves as cofactor.

It catalyses the reaction S-(5-deoxy-D-ribos-5-yl)-L-homocysteine = (S)-4,5-dihydroxypentane-2,3-dione + L-homocysteine. Functionally, involved in the synthesis of autoinducer 2 (AI-2) which is secreted by bacteria and is used to communicate both the cell density and the metabolic potential of the environment. The regulation of gene expression in response to changes in cell density is called quorum sensing. Catalyzes the transformation of S-ribosylhomocysteine (RHC) to homocysteine (HC) and 4,5-dihydroxy-2,3-pentadione (DPD). This is S-ribosylhomocysteine lyase from Photobacterium profundum (strain SS9).